Here is a 455-residue protein sequence, read N- to C-terminus: Chromosomal replication initiator protein DnaA (455 aa).

Residues 1-75 (MDTNNNIEKE…EILSQNKVGM (75 aa)) are domain I, interacts with DnaA modulators. The interval 75–106 (MHLAHSVDVRIEVAPKIQISAQPNINYKAVKT) is domain II. The domain III, AAA+ region stretch occupies residues 107 to 321 (SVKDSYTFEN…GAIIKISVNA (215 aa)). Positions 151, 153, 154, and 155 each coordinate ATP. The domain IV, binds dsDNA stretch occupies residues 322-455 (NLMNAPIDLN…DKKTAFHSSE (134 aa)).

The protein belongs to the DnaA family. As to quaternary structure, oligomerizes as a right-handed, spiral filament on DNA at oriC.

Its subcellular location is the cytoplasm. Functionally, plays an essential role in the initiation and regulation of chromosomal replication. ATP-DnaA binds to the origin of replication (oriC) to initiate formation of the DNA replication initiation complex once per cell cycle. Binds the DnaA box (a 9 base pair repeat at the origin) and separates the double-stranded (ds)DNA. Forms a right-handed helical filament on oriC DNA; dsDNA binds to the exterior of the filament while single-stranded (ss)DNA is stabiized in the filament's interior. The ATP-DnaA-oriC complex binds and stabilizes one strand of the AT-rich DNA unwinding element (DUE), permitting loading of DNA polymerase. After initiation quickly degrades to an ADP-DnaA complex that is not apt for DNA replication. Binds acidic phospholipids. This Helicobacter pylori (strain Shi470) protein is Chromosomal replication initiator protein DnaA.